A 395-amino-acid chain; its full sequence is NAD(P)H-quinone oxidoreductase subunit H, chloroplastic (395 aa).

This sequence belongs to the complex I 49 kDa subunit family. In terms of assembly, NDH is composed of at least 16 different subunits, 5 of which are encoded in the nucleus.

Its subcellular location is the plastid. The protein resides in the chloroplast thylakoid membrane. It carries out the reaction a plastoquinone + NADH + (n+1) H(+)(in) = a plastoquinol + NAD(+) + n H(+)(out). The enzyme catalyses a plastoquinone + NADPH + (n+1) H(+)(in) = a plastoquinol + NADP(+) + n H(+)(out). Its function is as follows. NDH shuttles electrons from NAD(P)H:plastoquinone, via FMN and iron-sulfur (Fe-S) centers, to quinones in the photosynthetic chain and possibly in a chloroplast respiratory chain. The immediate electron acceptor for the enzyme in this species is believed to be plastoquinone. Couples the redox reaction to proton translocation, and thus conserves the redox energy in a proton gradient. The chain is NAD(P)H-quinone oxidoreductase subunit H, chloroplastic from Coffea arabica (Arabian coffee).